The chain runs to 2936 residues: Neurobeachin (2936 aa).

The interval 961-985 (ENIKKGKKGNVSTISGLSSQTAGAK) is disordered. Residues 970-982 (NVSTISGLSSQTA) are compositionally biased toward polar residues. 2 positions are modified to phosphoserine: Ser-1001 and Ser-1004. Composition is skewed to polar residues over residues 1203–1220 (TSDG…SSTK) and 1231–1241 (TLETESSNSKA). Disordered regions lie at residues 1203–1222 (TSDG…TKGL), 1231–1265 (TLET…ESGK), and 1270–1289 (IQTT…QQDR). Residues 1253 to 1265 (DTERSDDGKESGK) are compositionally biased toward basic and acidic residues. Polar residues predominate over residues 1270–1286 (IQTTATTQAVQGRSSTQ). One copy of the WD 1 repeat lies at 1316-1358 (TTMFRIPEFKWSPMHQRLLTDLLFALETDVHVWRSHSTKSVMD). Disordered stretches follow at residues 1480 to 1521 (QRDR…LSPI), 1639 to 1667 (PDTV…DSGM), 1701 to 1721 (VKKS…PAPS), and 1830 to 1850 (TGAV…VNGA). Ser-1519 carries the post-translational modification Phosphoserine. Residues 1701–1714 (VKKSQESLTEHPSE) show a composition bias toward basic and acidic residues. Residues Ser-1704 and Ser-1707 each carry the phosphoserine modification. Low complexity predominate over residues 1835 to 1845 (SGSSSSSSSSS). A Phosphoserine modification is found at Ser-2128. The BEACH-type PH domain occupies 2137 to 2245 (NLAGPVVLST…TVKKVVYSLP (109 aa)). The BEACH domain maps to 2264–2553 (ATPRQLYKSS…QLLIEPHPPR (290 aa)). Ser-2565 is subject to Phosphoserine. WD repeat units follow at residues 2708-2751 (GHWD…HIIG), 2768-2808 (GHDH…RALE), 2850-2889 (EIND…QLYI), and 2892-2931 (GCDA…WHYE).

It belongs to the WD repeat neurobeachin family. In terms of assembly, interacts with RII subunit of PKA. Forebrain, brainstem and cerebellum.

Its subcellular location is the membrane. The protein resides in the endomembrane system. It localises to the postsynaptic cell membrane. Functionally, binds to type II regulatory subunits of protein kinase A and anchors/targets them to the membrane. May anchor the kinase to cytoskeletal and/or organelle-associated proteins. May have a role in membrane trafficking. The chain is Neurobeachin (Nbea) from Mus musculus (Mouse).